The following is a 62-amino-acid chain: Photosystem II reaction center protein Z (62 aa).

Helical transmembrane passes span 8–28 (AVFALIATSSILLIGVPVVFA) and 41–61 (FSGTSLWIGLVFLVGILNSLI).

This sequence belongs to the PsbZ family. As to quaternary structure, PSII is composed of 1 copy each of membrane proteins PsbA, PsbB, PsbC, PsbD, PsbE, PsbF, PsbH, PsbI, PsbJ, PsbK, PsbL, PsbM, PsbT, PsbY, PsbZ, Psb30/Ycf12, at least 3 peripheral proteins of the oxygen-evolving complex and a large number of cofactors. It forms dimeric complexes.

Its subcellular location is the plastid. The protein resides in the chloroplast thylakoid membrane. May control the interaction of photosystem II (PSII) cores with the light-harvesting antenna, regulates electron flow through the 2 photosystem reaction centers. PSII is a light-driven water plastoquinone oxidoreductase, using light energy to abstract electrons from H(2)O, generating a proton gradient subsequently used for ATP formation. This Panax ginseng (Korean ginseng) protein is Photosystem II reaction center protein Z.